A 1218-amino-acid polypeptide reads, in one-letter code: Protein jagged-1 (1218 aa).

Residues 1 to 33 form the signal peptide; the sequence is MRSPRTRGRPGRPLSLLLALLCALRAKVCGASG. The Extracellular portion of the chain corresponds to 34–1067; it reads QFELEILSMQ…QRRPLKNRTD (1034 aa). N-linked (GlcNAc...) asparagine glycosylation occurs at asparagine 143. The DSL domain maps to 185–229; sequence VTCDDHYYGFGCNKFCRPRDDFFGHYACDQNGNKTCMEGWMGPDC. Intrachain disulfides connect cysteine 187–cysteine 196 and cysteine 200–cysteine 212. The segment at 199 to 207 is important for interaction with NOTCH1; it reads FCRPRDDFF. Asparagine 217 is a glycosylation site (N-linked (GlcNAc...) asparagine). 40 disulfide bridges follow: cysteine 220/cysteine 229, cysteine 234/cysteine 245, cysteine 238/cysteine 251, cysteine 253/cysteine 262, cysteine 265/cysteine 276, cysteine 271/cysteine 282, cysteine 284/cysteine 293, cysteine 300/cysteine 312, cysteine 306/cysteine 322, cysteine 324/cysteine 333, cysteine 340/cysteine 351, cysteine 345/cysteine 360, cysteine 362/cysteine 371, cysteine 378/cysteine 389, cysteine 383/cysteine 398, cysteine 400/cysteine 409, cysteine 416/cysteine 427, cysteine 421/cysteine 436, cysteine 438/cysteine 447, cysteine 454/cysteine 464, cysteine 458/cysteine 473, cysteine 475/cysteine 484, cysteine 491/cysteine 502, cysteine 496/cysteine 511, cysteine 513/cysteine 522, cysteine 529/cysteine 540, cysteine 534/cysteine 549, cysteine 551/cysteine 560, cysteine 578/cysteine 605, cysteine 599/cysteine 615, cysteine 617/cysteine 626, cysteine 633/cysteine 644, cysteine 638/cysteine 653, cysteine 655/cysteine 664, cysteine 671/cysteine 682, cysteine 676/cysteine 691, cysteine 693/cysteine 702, cysteine 709/cysteine 720, cysteine 714/cysteine 729, and cysteine 731/cysteine 740. Residues 230–263 form the EGF-like 1 domain; sequence NKAICRQGCSPKHGSCKLPGDCRCQYGWQGLYCD. Residues 264-294 enclose the EGF-like 2; atypical domain; sequence KCIPHPGCVHGTCNEPWQCLCETNWGGQLCD. EGF-like domains follow at residues 296–334 and 336–372; these read DLNYCGTHQPCLNRGTCSNTGPDKYQCSCPEGYSGPNCE and AEHACLSDPCHNRGSCKETSSGFECECSPGWTGPTCS. The region spanning 374-410 is the EGF-like 5; calcium-binding domain; sequence NIDDCSPNNCSHGGTCQDLVNGFKCVCPPQWTGKTCQ. The N-linked (GlcNAc...) asparagine glycan is linked to asparagine 382. The EGF-like 6; calcium-binding domain maps to 412-448; the sequence is DANECEAKPCVNARSCKNLIASYYCDCLPGWMGQNCD. Residues 450–485 form the EGF-like 7; calcium-binding domain; the sequence is NINDCLGQCQNDASCRDLVNGYRCICPPGYAGDHCE. An EGF-like 8; calcium-binding domain is found at 487 to 523; it reads DIDECASNPCLNGGHCQNEINRFQCLCPTGFSGNLCQ. EGF-like domains lie at 525-561 and 586-627; these read DIDYCEPNPCQNGAQCYNRASDYFCKCPEDYEGKNCS and DTPE…TYCH. N-linked (GlcNAc...) asparagine glycosylation is present at asparagine 559. The EGF-like 11; calcium-binding domain maps to 629-665; that stretch reads NINDCESNPCKNGGTCIDGVNSYKCICSDGWEGAHCE. Residues 667-703 enclose the EGF-like 12; calcium-binding domain; it reads NINDCSQNPCHYGGTCRDLVNDFYCDCKNGWKGKTCH. EGF-like domains lie at 705–741 and 744–780; these read RDSQCDEATCNNGGTCYDEVDTFKCMCPGGWEGTTCN and RNSSCLPNPCHNGGTCVVNGDSFTCVCKEGWEGPICT. A glycan (N-linked (GlcNAc...) asparagine) is linked at asparagine 745. 9 disulfides stabilise this stretch: cysteine 748–cysteine 759, cysteine 753–cysteine 768, cysteine 770–cysteine 779, cysteine 786–cysteine 797, cysteine 791–cysteine 806, cysteine 808–cysteine 817, cysteine 824–cysteine 835, cysteine 829–cysteine 844, and cysteine 846–cysteine 855. An EGF-like 15; calcium-binding domain is found at 782 to 818; that stretch reads NTNDCSPHPCYNSGTCVDGDNWYRCECAPGFAGPDCR. One can recognise an EGF-like 16; calcium-binding domain in the interval 820–856; it reads NINECQSSPCAFGATCVDEINGYQCICPPGHSGAKCH. 4 N-linked (GlcNAc...) asparagine glycosylation sites follow: asparagine 960, asparagine 991, asparagine 1045, and asparagine 1064. A helical transmembrane segment spans residues 1068–1093; sequence FLVPLLSSVLTVAWVCCLVTAFYWCV. Topologically, residues 1094-1218 are cytoplasmic; the sequence is RKRRKPSSHT…QSLNRMEYIV (125 aa). Residues 1181 to 1218 form a disordered region; it reads REEKAPSGTPTKHPNWTNKQDNRDLESAQSLNRMEYIV. A compositionally biased stretch (polar residues) spans 1188 to 1199; sequence GTPTKHPNWTNK.

In terms of assembly, interacts with NOTCH1, NOTCH2 and NOTCH3. As to expression, widely expressed in many tissues, with highest expression in brain, heart, muscle and thymus.

It is found in the membrane. The protein resides in the cell membrane. Its function is as follows. Ligand for multiple Notch receptors and involved in the mediation of Notch signaling. May be involved in cell-fate decisions during hematopoiesis. Seems to be involved in early and late stages of mammalian cardiovascular development. Inhibits myoblast differentiation. May regulate fibroblast growth factor-induced angiogenesis. The polypeptide is Protein jagged-1 (Jag1) (Mus musculus (Mouse)).